A 209-amino-acid polypeptide reads, in one-letter code: Glycerol-3-phosphate acyltransferase (209 aa).

Helical transmembrane passes span 4–24 (IAIG…AILI), 53–75 (LAAA…IGYG), 80–102 (PFWL…FFHF), 112–132 (LGAI…TWLL), and 138–158 (GYSS…VWWF).

The protein belongs to the PlsY family. In terms of assembly, probably interacts with PlsX.

It localises to the cell inner membrane. The catalysed reaction is an acyl phosphate + sn-glycerol 3-phosphate = a 1-acyl-sn-glycero-3-phosphate + phosphate. It functions in the pathway lipid metabolism; phospholipid metabolism. Functionally, catalyzes the transfer of an acyl group from acyl-phosphate (acyl-PO(4)) to glycerol-3-phosphate (G3P) to form lysophosphatidic acid (LPA). This enzyme utilizes acyl-phosphate as fatty acyl donor, but not acyl-CoA or acyl-ACP. The chain is Glycerol-3-phosphate acyltransferase from Sodalis glossinidius (strain morsitans).